The primary structure comprises 380 residues: MSEIMHKLEKIREELNSYFLERREEIDIALTSILANEHTVFLGNPGVAKSQLIRAIASHINANYFEKLITRFTTEDELFGPLSIKELKDNDRFVRKTSGYLPTAEIAFLDEVFKANSSILNALLSIINERIYHNGDKIEKVPLISLFGASNELPEENELLAFYDRFLFRKVVRGIRSCENLVKLIKLDEEYKPKTTISIKELRKMQEKANEVDIENIIGYLVDIKKKLSQNHIYISDRRFKKSVKAIKCFAYLNGRREAEIEDLEILRHIFWDDIDDILIVSKVIFDITNKYAEQVLDKAEIIKNLKNELKYIDIKKIGECKKDYNKLIEILCKMAYIRLELKKIRNEAIINKRKTDFIDEVIKETDEFNNYIEGILNEL.

This is an uncharacterized protein from Methanocaldococcus jannaschii (strain ATCC 43067 / DSM 2661 / JAL-1 / JCM 10045 / NBRC 100440) (Methanococcus jannaschii).